The primary structure comprises 110 residues: tRNA-binding protein YgjH (110 aa).

In terms of domain architecture, tRNA-binding spans 8-110 (DFARLEMRVG…RMMPAGVRVV (103 aa)).

In terms of assembly, homodimer.

The chain is tRNA-binding protein YgjH (ygjH) from Escherichia coli (strain K12).